Here is an 85-residue protein sequence, read N- to C-terminus: Toxin TdNa8 (85 aa).

The signal sequence occupies residues 1–19 (MNYLTLIAAASLLTAGTES). An LCN-type CS-alpha/beta domain is found at 21–81 (KDGYPVKEGD…AAIKGYGRCR (61 aa)). Disulfide bonds link Cys31–Cys80, Cys35–Cys56, Cys42–Cys63, and Cys46–Cys65. At Pro82 the chain carries Proline amide.

It belongs to the long (4 C-C) scorpion toxin superfamily. Sodium channel inhibitor family. Alpha subfamily. As to expression, expressed by the venom gland.

The protein resides in the secreted. In terms of biological role, alpha toxins bind voltage-independently at site-3 of sodium channels (Nav) and inhibit the inactivation of the activated channels, thereby blocking neuronal transmission. This chain is Toxin TdNa8, found in Tityus discrepans (Venezuelan scorpion).